A 384-amino-acid chain; its full sequence is Sialyltransferase-like protein 3 (384 aa).

At 1 to 5 the chain is on the cytoplasmic side; that stretch reads MKRRH. The chain crosses the membrane as a helical; Signal-anchor for type II membrane protein span at residues 6 to 26; sequence WSHPSCGLLLLVAVFCLLLVF. Residues 27–384 are Lumenal-facing; it reads RCSQLRHSGD…FRLPPVSFYR (358 aa). Asn241 carries N-linked (GlcNAc...) asparagine glycosylation.

Belongs to the glycosyltransferase 29 family.

The protein localises to the golgi apparatus membrane. In terms of biological role, possesses sialyltransferase-like activity in vitro. Transfers sialic acid to the glycoprotein asialofetuin. The transferred sialic acid is linked to galactose of Gal-beta-1,3-GalNAc through alpha-2,6-linkage. This chain is Sialyltransferase-like protein 3, found in Oryza sativa subsp. indica (Rice).